The chain runs to 111 residues: Cytochrome b-c1 complex subunit 7 (111 aa).

The residue at position 2 (alanine 2) is an N-acetylalanine. Position 12 is an N6-acetyllysine; alternate (lysine 12). The residue at position 12 (lysine 12) is an N6-succinyllysine; alternate. An N6-acetyllysine modification is found at lysine 19. N6-acetyllysine; alternate is present on lysine 78. At lysine 78 the chain carries N6-succinyllysine; alternate. N6-acetyllysine occurs at positions 83 and 96.

It belongs to the UQCRB/QCR7 family. As to quaternary structure, component of the ubiquinol-cytochrome c oxidoreductase (cytochrome b-c1 complex, complex III, CIII), a multisubunit enzyme composed of 11 subunits. The complex is composed of 3 respiratory subunits cytochrome b, cytochrome c1 and Rieske protein UQCRFS1, 2 core protein subunits UQCRC1/QCR1 and UQCRC2/QCR2, and 6 low-molecular weight protein subunits UQCRH/QCR6, UQCRB/QCR7, UQCRQ/QCR8, UQCR10/QCR9, UQCR11/QCR10 and subunit 9, the cleavage product of Rieske protein UQCRFS1. The complex exists as an obligatory dimer and forms supercomplexes (SCs) in the inner mitochondrial membrane with NADH-ubiquinone oxidoreductase (complex I, CI) and cytochrome c oxidase (complex IV, CIV), resulting in different assemblies (supercomplex SCI(1)III(2)IV(1) and megacomplex MCI(2)III(2)IV(2)).

The protein localises to the mitochondrion inner membrane. Functionally, component of the ubiquinol-cytochrome c oxidoreductase, a multisubunit transmembrane complex that is part of the mitochondrial electron transport chain which drives oxidative phosphorylation. The respiratory chain contains 3 multisubunit complexes succinate dehydrogenase (complex II, CII), ubiquinol-cytochrome c oxidoreductase (cytochrome b-c1 complex, complex III, CIII) and cytochrome c oxidase (complex IV, CIV), that cooperate to transfer electrons derived from NADH and succinate to molecular oxygen, creating an electrochemical gradient over the inner membrane that drives transmembrane transport and the ATP synthase. The cytochrome b-c1 complex catalyzes electron transfer from ubiquinol to cytochrome c, linking this redox reaction to translocation of protons across the mitochondrial inner membrane, with protons being carried across the membrane as hydrogens on the quinol. In the process called Q cycle, 2 protons are consumed from the matrix, 4 protons are released into the intermembrane space and 2 electrons are passed to cytochrome c. This Homo sapiens (Human) protein is Cytochrome b-c1 complex subunit 7 (UQCRB).